We begin with the raw amino-acid sequence, 223 residues long: UPF0502 protein Avin_04790 (223 aa).

It belongs to the UPF0502 family.

The chain is UPF0502 protein Avin_04790 from Azotobacter vinelandii (strain DJ / ATCC BAA-1303).